A 166-amino-acid chain; its full sequence is Large ribosomal subunit protein uL10 (166 aa).

The protein belongs to the universal ribosomal protein uL10 family. Part of the ribosomal stalk of the 50S ribosomal subunit. The N-terminus interacts with L11 and the large rRNA to form the base of the stalk. The C-terminus forms an elongated spine to which L12 dimers bind in a sequential fashion forming a multimeric L10(L12)X complex.

Functionally, forms part of the ribosomal stalk, playing a central role in the interaction of the ribosome with GTP-bound translation factors. The protein is Large ribosomal subunit protein uL10 of Pseudomonas putida (strain W619).